Consider the following 125-residue polypeptide: Photoactive yellow protein (125 aa).

The PAS domain maps to 23–86 (IDDLAFGAIQ…GRFREGVANG (64 aa)). The residue at position 69 (Cys-69) is an S-(4-hydroxycinnamyl)cysteine.

This sequence belongs to the photoactive yellow protein family. Post-translationally, the 4-hydroxycinnamic acid (p-coumaric acid) chromophore is covalently bound via a thioester linkage.

In terms of biological role, this photoactive protein is a photoreceptor with kinetics similar to that of rhodopsin. This chain is Photoactive yellow protein (pyp), found in Rhodothalassium salexigens (Rhodospirillum salexigens).